Consider the following 157-residue polypeptide: Thioredoxin-T (157 aa).

The Thioredoxin domain maps to 2–107; it reads VYPVRNKDDL…LAKLMEKHAG (106 aa). Cys-32 and Cys-35 are joined by a disulfide. The disordered stretch occupies residues 132–157; that stretch reads ESSESDNDNNNVNEVSAHDENAVLEH. The span at 147–157 shows a compositional bias: basic and acidic residues; it reads SAHDENAVLEH.

This sequence belongs to the thioredoxin family. Testis specific. Not expressed in the embryo. Becomes progressively more strongly expressed during larval and pupal development. In testis, it is strongly expressed in young spermatocytes, and postmeiotic spermatid stages, then expression decreases at the nuclear elongation stage. Strongly expressed in the waste bag, in which material no longer needed for the mature sperm is eliminated. Not expressed in the stem cells and spermatogonial cells.

Its subcellular location is the nucleus. The protein localises to the chromosome. Functionally, probably participates in various redox reactions through the reversible oxidation of its active center dithiol to a disulfide and catalyzes dithiol-disulfide exchange reactions. Its tissue specificity suggests a regulatory role in the germline. The sequence is that of Thioredoxin-T (TrxT) from Drosophila melanogaster (Fruit fly).